The chain runs to 137 residues: Phosphoribosyl-AMP cyclohydrolase (137 aa).

Asp84 provides a ligand contact to Mg(2+). Cys85 serves as a coordination point for Zn(2+). 2 residues coordinate Mg(2+): Asp86 and Asp88. Zn(2+)-binding residues include Cys101 and Cys108.

The protein belongs to the PRA-CH family. Homodimer. The cofactor is Mg(2+). It depends on Zn(2+) as a cofactor.

Its subcellular location is the cytoplasm. It carries out the reaction 1-(5-phospho-beta-D-ribosyl)-5'-AMP + H2O = 1-(5-phospho-beta-D-ribosyl)-5-[(5-phospho-beta-D-ribosylamino)methylideneamino]imidazole-4-carboxamide. Its pathway is amino-acid biosynthesis; L-histidine biosynthesis; L-histidine from 5-phospho-alpha-D-ribose 1-diphosphate: step 3/9. Its function is as follows. Catalyzes the hydrolysis of the adenine ring of phosphoribosyl-AMP. The chain is Phosphoribosyl-AMP cyclohydrolase from Chlorobium phaeobacteroides (strain DSM 266 / SMG 266 / 2430).